We begin with the raw amino-acid sequence, 169 residues long: Positive control factor (169 aa).

Positions 132 to 157 (YERIADLLGVKKSTVQTTIKRASLKM) form a DNA-binding region, H-T-H motif.

In terms of biological role, positive regulatory protein that acts at the late promoter PL. The protein is Positive control factor (xpf) of Bacillus subtilis (strain 168).